Here is a 128-residue protein sequence, read N- to C-terminus: MESKEKRAVNNLSMENTNQENEEKEEKEQVANKGEPLALPLDAGEYCVPRGNRRRFRVRQPILQYRWDMMHRLGEPQARMREENMERIGEEVRQLMEKLREKQLSHSLRAVSTDPPHHDHHDEFCLMP.

The tract at residues 1 to 37 is disordered; sequence MESKEKRAVNNLSMENTNQENEEKEEKEQVANKGEPL. Phosphoserine is present on Ser105. A disordered region spans residues 107-128; it reads SLRAVSTDPPHHDHHDEFCLMP. The span at 115–128 shows a compositional bias: basic and acidic residues; that stretch reads PPHHDHHDEFCLMP. Residues 117–121 form a his cluster region; sequence HHDHH. Residue Cys125 coordinates Zn(2+).

This sequence belongs to the BEX family. Interacts with neurotrophin receptor p75NTR/NGFR. Interacts with OMP. Post-translationally, phosphorylated. Phosphorylation of Ser-105 protects it from the proteasome. Ubiquitinated. Degraded by the proteasome.

It localises to the nucleus. The protein resides in the cytoplasm. Functionally, signaling adapter molecule involved in p75NTR/NGFR signaling. Plays a role in cell cycle progression and neuronal differentiation. Inhibits neuronal differentiation in response to nerve growth factor (NGF). May act as a link between the cell cycle and neurotrophic factor signaling, possibly by functioning as an upstream modulator of receptor signaling, coordinating biological responses to external signals with internal cellular states. In absence of reductive stress, acts as a pseudosubstrate for the CRL2(FEM1B) complex: associates with FEM1B via zinc, thereby preventing association between FEM1B and its substrates. This Macaca fascicularis (Crab-eating macaque) protein is Protein BEX1 (BEX1).